A 115-amino-acid polypeptide reads, in one-letter code: MEGQAVTTNPWLIMAINMTVVFAVLIALGILMEIVHLIDPTKKKKEAPAATAPVATPTATPVAPANASAQNEDEVVAAIVGAIVAMGYSSEQIASIRPTATSAKWRLEGRLSGRG.

The chain crosses the membrane as a helical span at residues 11–31; the sequence is WLIMAINMTVVFAVLIALGIL. Positions 46-70 are disordered; that stretch reads EAPAATAPVATPTATPVAPANASAQ. The segment covering 48-65 has biased composition (low complexity); sequence PAATAPVATPTATPVAPA.

The protein belongs to the OadG family. As to quaternary structure, the methylmalonyl-CoA decarboxylase is composed of five subunits: the carboxyltransferase alpha subunit (MmdA), the tunnel beta subunit (MmdB), the biotin-containing gamma subunit (MmdC), and the delta (MmdD) and epsilon (MmdE) subunits. The N-terminus is blocked.

The protein resides in the cell membrane. The catalysed reaction is (S)-methylmalonyl-CoA + Na(+)(in) + H(+)(out) = propanoyl-CoA + Na(+)(out) + CO2. With respect to regulation, completely inhibited by avidin. Its function is as follows. Subunit of the sodium ion pump methylmalonyl-CoA decarboxylase, which converts the chemical energy of a decarboxylation reaction into an electrochemical gradient of Na(+) ions across the cytoplasmic membrane, thereby creating a sodium ion motive force that is used for ATP synthesis. The delta subunit is required for catalytic activity as well as for the proper assembly of the individual subunits to an enzyme complex. Can also convert malonyl-CoA into acetyl-CoA. The chain is Methylmalonyl-CoA decarboxylase subunit delta from Veillonella parvula (Staphylococcus parvulus).